Here is a 324-residue protein sequence, read N- to C-terminus: Leucine carboxyl methyltransferase 1 (324 aa).

S-adenosyl-L-methionine is bound by residues Arg-74, Gly-101, Asp-128, 172-173 (DL), and Glu-196.

This sequence belongs to the methyltransferase superfamily. LCMT family.

The enzyme catalyses [phosphatase 2A protein]-C-terminal L-leucine + S-adenosyl-L-methionine = [phosphatase 2A protein]-C-terminal L-leucine methyl ester + S-adenosyl-L-homocysteine. Functionally, methylates the carboxyl group of the C-terminal leucine residue of protein phosphatase 2A catalytic subunits to form alpha-leucine ester residues. The protein is Leucine carboxyl methyltransferase 1 (PPM1) of Yarrowia lipolytica (strain CLIB 122 / E 150) (Yeast).